A 90-amino-acid chain; its full sequence is RNA-binding protein Hfq (90 aa).

Residues 9–69 (DRFLNHLRVN…ISTIIPSSYV (61 aa)) enclose the Sm domain.

This sequence belongs to the Hfq family. In terms of assembly, homohexamer.

Its function is as follows. RNA chaperone that binds small regulatory RNA (sRNAs) and mRNAs to facilitate mRNA translational regulation in response to envelope stress, environmental stress and changes in metabolite concentrations. Also binds with high specificity to tRNAs. In Thermotoga petrophila (strain ATCC BAA-488 / DSM 13995 / JCM 10881 / RKU-1), this protein is RNA-binding protein Hfq.